Here is a 562-residue protein sequence, read N- to C-terminus: Zinc finger protein 579 (562 aa).

The span at Met-1–Gly-11 shows a compositional bias: pro residues. The tract at residues Met-1 to Pro-43 is disordered. A compositionally biased stretch (basic residues) spans His-15–Gly-33. C2H2-type zinc fingers lie at residues Leu-44–His-66, His-72–His-94, and Leu-100–His-123. At Arg-92 the chain carries Omega-N-methylarginine. Residues Thr-139–Ala-203 are disordered. Residues Ser-194 and Ser-196 each carry the phosphoserine modification. 2 consecutive C2H2-type zinc fingers follow at residues His-270 to His-292 and Phe-298 to His-320. A disordered region spans residues Ala-327 to Ala-379. The span at Pro-349–Gly-369 shows a compositional bias: gly residues. 3 consecutive C2H2-type zinc fingers follow at residues Phe-384–His-406, Phe-412–His-434, and His-441–His-463. The tract at residues Gln-477–Ser-562 is disordered. 2 stretches are compositionally biased toward pro residues: residues Thr-482–Leu-491 and Pro-512–Pro-525. Phosphoserine is present on Ser-483.

Belongs to the krueppel C2H2-type zinc-finger protein family.

The protein resides in the nucleus. Its function is as follows. May be involved in transcriptional regulation. The polypeptide is Zinc finger protein 579 (ZNF579) (Homo sapiens (Human)).